The following is a 292-amino-acid chain: Aquaporin PIP1-3/PIP1-4 (292 aa).

Residues Met-1–Pro-42 are disordered. The next 2 membrane-spanning stretches (helical) occupy residues Ile-61–Val-81 and Ile-96–His-118. Residues Asn-120–Ala-122 carry the NPA 1 motif. Helical transmembrane passes span Ile-139–Phe-159, Gly-181–Ala-201, and Ile-215–Ile-235. The NPA 2 motif lies at Asn-241–Ala-243. A helical membrane pass occupies residues Ile-263 to Ile-283.

This sequence belongs to the MIP/aquaporin (TC 1.A.8) family. PIP (TC 1.A.8.11) subfamily.

The protein resides in the cell membrane. In terms of biological role, aquaporins facilitate the transport of water and small neutral solutes across cell membranes. This Zea mays (Maize) protein is Aquaporin PIP1-3/PIP1-4 (PIP1-3).